Reading from the N-terminus, the 281-residue chain is Splicing regulator RBM11 (281 aa).

The RRM domain occupies 10 to 87 (RTVFVGNLEA…RPINVQYRFG (78 aa)). A disordered region spans residues 184-281 (PSSYKWTHQQ…FRKSKKKKRY (98 aa)). 2 stretches are compositionally biased toward polar residues: residues 187–217 (YKWTHQQPSDSDLYQMTAPLPNSASVSSSLN) and 229–242 (YKWTHQQPSDSDLY). The Bipartite nuclear localization signal signature appears at 245-280 (NKRKRQKQTSDSDSSTDNNRGNECSQKFRKSKKKKR). Over residues 271–281 (KFRKSKKKKRY) the composition is skewed to basic residues.

Homodimer. In terms of tissue distribution, expressed in brain, hippocampus, prefrontal cortex, cerebellum, spinal cord, testis, mammary gland, spleen and kidney. Also expressed in fetal brain.

It localises to the nucleus. Its subcellular location is the nucleoplasm. The protein localises to the nucleus speckle. Its function is as follows. Tissue-specific splicing factor with potential implication in the regulation of alternative splicing during neuron and germ cell differentiation. Antagonizes SRSF1-mediated BCL-X splicing. May affect the choice of alternative 5' splice sites by binding to specific sequences in exons and antagonizing the SR protein SRSF1. The protein is Splicing regulator RBM11 of Homo sapiens (Human).